Here is a 421-residue protein sequence, read N- to C-terminus: Histidine--tRNA ligase (421 aa).

The protein belongs to the class-II aminoacyl-tRNA synthetase family. Homodimer.

The protein resides in the cytoplasm. The catalysed reaction is tRNA(His) + L-histidine + ATP = L-histidyl-tRNA(His) + AMP + diphosphate + H(+). This Francisella tularensis subsp. mediasiatica (strain FSC147) protein is Histidine--tRNA ligase.